Here is an 83-residue protein sequence, read N- to C-terminus: Small ribosomal subunit protein bS16 (83 aa).

The protein belongs to the bacterial ribosomal protein bS16 family.

This is Small ribosomal subunit protein bS16 from Acidovorax ebreus (strain TPSY) (Diaphorobacter sp. (strain TPSY)).